The following is a 92-amino-acid chain: Small ribosomal subunit protein bS18A (92 aa).

This sequence belongs to the bacterial ribosomal protein bS18 family. As to quaternary structure, part of the 30S ribosomal subunit. Forms a tight heterodimer with protein bS6.

Binds as a heterodimer with protein bS6 to the central domain of the 16S rRNA, where it helps stabilize the platform of the 30S subunit. In Cupriavidus pinatubonensis (strain JMP 134 / LMG 1197) (Cupriavidus necator (strain JMP 134)), this protein is Small ribosomal subunit protein bS18A.